The primary structure comprises 197 residues: uncharacterized protein (197 aa).

The protein belongs to the methyltransferase superfamily.

This is an uncharacterized protein from Mycobacterium bovis (strain ATCC BAA-935 / AF2122/97).